Here is a 358-residue protein sequence, read N- to C-terminus: Carbohydrate sulfotransferase 10 (358 aa).

The Cytoplasmic segment spans residues Met-1–Leu-6. Residues Leu-7–Leu-27 traverse the membrane as a helical; Signal-anchor for type II membrane protein segment. The Lumenal segment spans residues Thr-28–Asn-358. Asn-101 carries an N-linked (GlcNAc...) asparagine glycan. Residues Pro-129 to Gln-135 and Arg-191 to Ser-199 each bind 3'-phosphoadenylyl sulfate. Asn-318 is a glycosylation site (N-linked (GlcNAc...) asparagine).

Belongs to the sulfotransferase 2 family. As to expression, predominantly expressed in hypertrophic, prehypertrophic and proliferative chondrocytes at E12 but is down-regulated in epiphyseal chondrocytes.

The protein localises to the golgi apparatus membrane. Its function is as follows. Catalyzes the transfer of sulfate to position 3 of terminal glucuronic acid of both protein- and lipid-linked oligosaccharides. Participates in biosynthesis of HNK-1 carbohydrate structure, a sulfated glucuronyl-lactosaminyl residue carried by many neural recognition molecules, which is involved in cell interactions during ontogenetic development and in synaptic plasticity in the adult. This chain is Carbohydrate sulfotransferase 10 (CHST10), found in Gallus gallus (Chicken).